The sequence spans 76 residues: ATP synthase subunit c (76 aa).

Helical transmembrane passes span 13–33 and 55–75; these read LNVV…GILI and FLGL…AFIF.

This sequence belongs to the ATPase C chain family. In terms of assembly, F-type ATPases have 2 components, F(1) - the catalytic core - and F(0) - the membrane proton channel. F(1) has five subunits: alpha(3), beta(3), gamma(1), delta(1), epsilon(1). F(0) has three main subunits: a(1), b(2) and c(10-14). The alpha and beta chains form an alternating ring which encloses part of the gamma chain. F(1) is attached to F(0) by a central stalk formed by the gamma and epsilon chains, while a peripheral stalk is formed by the delta and b chains.

It localises to the cell membrane. Functionally, f(1)F(0) ATP synthase produces ATP from ADP in the presence of a proton or sodium gradient. F-type ATPases consist of two structural domains, F(1) containing the extramembraneous catalytic core and F(0) containing the membrane proton channel, linked together by a central stalk and a peripheral stalk. During catalysis, ATP synthesis in the catalytic domain of F(1) is coupled via a rotary mechanism of the central stalk subunits to proton translocation. Key component of the F(0) channel; it plays a direct role in translocation across the membrane. A homomeric c-ring of between 10-14 subunits forms the central stalk rotor element with the F(1) delta and epsilon subunits. The polypeptide is ATP synthase subunit c (Bifidobacterium animalis subsp. lactis (strain AD011)).